Here is a 101-residue protein sequence, read N- to C-terminus: NADH-quinone oxidoreductase subunit K (101 aa).

3 helical membrane-spanning segments follow: residues 4 to 24 (LTHF…GIFL), 30 to 50 (IILL…FIAF), and 61 to 81 (IFVF…LAIL).

It belongs to the complex I subunit 4L family. In terms of assembly, NDH-1 is composed of 14 different subunits. Subunits NuoA, H, J, K, L, M, N constitute the membrane sector of the complex.

The protein resides in the cell inner membrane. The catalysed reaction is a quinone + NADH + 5 H(+)(in) = a quinol + NAD(+) + 4 H(+)(out). NDH-1 shuttles electrons from NADH, via FMN and iron-sulfur (Fe-S) centers, to quinones in the respiratory chain. The immediate electron acceptor for the enzyme in this species is believed to be ubiquinone. Couples the redox reaction to proton translocation (for every two electrons transferred, four hydrogen ions are translocated across the cytoplasmic membrane), and thus conserves the redox energy in a proton gradient. The polypeptide is NADH-quinone oxidoreductase subunit K (Chromobacterium violaceum (strain ATCC 12472 / DSM 30191 / JCM 1249 / CCUG 213 / NBRC 12614 / NCIMB 9131 / NCTC 9757 / MK)).